Consider the following 357-residue polypeptide: Peptide chain release factor 1 (357 aa).

Residue Q234 is modified to N5-methylglutamine. Residues 283 to 313 (SKKQEQRSSNRKQQVGSGDRSERIRTYNFPQ) form a disordered region.

This sequence belongs to the prokaryotic/mitochondrial release factor family. Methylated by PrmC. Methylation increases the termination efficiency of RF1.

It localises to the cytoplasm. Peptide chain release factor 1 directs the termination of translation in response to the peptide chain termination codons UAG and UAA. The sequence is that of Peptide chain release factor 1 from Borrelia garinii subsp. bavariensis (strain ATCC BAA-2496 / DSM 23469 / PBi) (Borreliella bavariensis).